The chain runs to 526 residues: Thymocyte selection-associated high mobility group box protein TOX (526 aa).

Disordered stretches follow at residues 138-178 (MPDI…PHGQ) and 192-264 (GLNM…PQKP). Positions 192 to 203 (GLNMGGSNVPHN) are enriched in polar residues. Low complexity predominate over residues 209 to 220 (GSKSATPSPSSS). A compositionally biased stretch (basic and acidic residues) spans 228 to 245 (DTSKINGGEKRPASDMGK). Positions 237 to 256 (KRPASDMGKKPKTPKKKKKK) match the Nuclear localization signal motif. Residues 246 to 256 (KPKTPKKKKKK) show a composition bias toward basic residues. A DNA-binding region (HMG box) is located at residues 261–329 (PQKPVSAYAL…EYLKQLAAYR (69 aa)).

The protein belongs to the high motility group (HMG) box superfamily. In terms of assembly, interacts with HBO1 complex composed at least of KAT7/HBO1, ING4, MEAF6, and JADE2; this complex is involved in histone acetylation. Interacts with DNMT1, LEO1, PAF1, SAP130 and SIN3A; these interactors regulate chromatin remodeling. Interacts with an array of proteins involved in RNA processing and translation and DNA replication. As to expression, expressed in NK cells. Highly expressed in tumor-infiltrating CD8-positive T cells (at protein level).

Its subcellular location is the nucleus. Its function is as follows. Transcriptional regulator with a major role in neural stem cell commitment and corticogenesis as well as in lymphoid cell development and lymphoid tissue organogenesis. Binds to GC-rich DNA sequences in the proximity of transcription start sites and may alter chromatin structure, modifying access of transcription factors to DNA. During cortical development, controls the neural stem cell pool by inhibiting the switch from proliferative to differentiating progenitors. Beyond progenitor cells, promotes neurite outgrowth in newborn neurons migrating to reach the cortical plate. May activate or repress critical genes for neural stem cell fate such as SOX2, EOMES and ROBO2. Plays an essential role in the development of lymphoid tissue-inducer (LTi) cells, a subset necessary for the formation of secondary lymphoid organs: peripheral lymph nodes and Peyer's patches. Acts as a developmental checkpoint and regulates thymocyte positive selection toward T cell lineage commitment. Required for the development of various T cell subsets, including CD4-positive helper T cells, CD8-positive cytotoxic T cells, regulatory T cells and CD1D-dependent natural killer T (NKT) cells. Required for the differentiation of common lymphoid progenitors (CMP) to innate lymphoid cells (ILC). May regulate the NOTCH-mediated gene program, promoting differentiation of the ILC lineage. Required at the progenitor phase of NK cell development in the bone marrow to specify NK cell lineage commitment. Upon chronic antigen stimulation, diverts T cell development by promoting the generation of exhaustive T cells, while suppressing effector and memory T cell programming. May regulate the expression of genes encoding inhibitory receptors such as PDCD1 and induce the exhaustion program, to prevent the overstimulation of T cells and activation-induced cell death. This chain is Thymocyte selection-associated high mobility group box protein TOX, found in Homo sapiens (Human).